The sequence spans 142 residues: Large ribosomal subunit protein uL11 (142 aa).

Belongs to the universal ribosomal protein uL11 family. As to quaternary structure, part of the ribosomal stalk of the 50S ribosomal subunit. Interacts with L10 and the large rRNA to form the base of the stalk. L10 forms an elongated spine to which L12 dimers bind in a sequential fashion forming a multimeric L10(L12)X complex. In terms of processing, one or more lysine residues are methylated.

In terms of biological role, forms part of the ribosomal stalk which helps the ribosome interact with GTP-bound translation factors. This is Large ribosomal subunit protein uL11 from Buchnera aphidicola subsp. Schizaphis graminum (strain Sg).